A 375-amino-acid chain; its full sequence is Alcohol dehydrogenase 1B (375 aa).

S1 carries the N-acetylserine modification. Residues C46, H67, C97, C100, C103, C111, and C174 each contribute to the Zn(2+) site. NAD(+) contacts are provided by residues 199-204 (GLGGVG), D223, K228, 293-295 (VGV), and R370.

The protein belongs to the zinc-containing alcohol dehydrogenase family. Class-I subfamily. As to quaternary structure, multimeric (with different ratios of monomers). Zn(2+) is required as a cofactor.

Its subcellular location is the cytoplasm. The catalysed reaction is a primary alcohol + NAD(+) = an aldehyde + NADH + H(+). It carries out the reaction a secondary alcohol + NAD(+) = a ketone + NADH + H(+). This Saara hardwickii (Indian spiny-tailed lizard) protein is Alcohol dehydrogenase 1B.